The following is a 204-amino-acid chain: Nascent polypeptide-associated complex subunit alpha-like protein 3 (204 aa).

Residues 1–23 are compositionally biased toward basic and acidic residues; it reads MTAEQKVELAAKLEEQKIDLDKP. Disordered regions lie at residues 1-68 and 141-165; these read MTAE…AMLK and GETSSAATAAAVQDDDDEEVDEEGV. Acidic residues predominate over residues 24–43; sequence EVEDDDDNDEDDSEDDDEAE. A Phosphoserine modification is found at serine 36. Positions 44 to 59 are enriched in basic and acidic residues; the sequence is GHDGEAGGRSKQSRSE. The NAC-A/B domain occupies 56 to 121; it reads SRSEKKSRKA…AKIEDLSSQL (66 aa). Residues 141-152 are compositionally biased toward low complexity; it reads GETSSAATAAAV. The span at 153–164 shows a compositional bias: acidic residues; it reads QDDDDEEVDEEG. The UBA domain maps to 159–204; the sequence is EVDEEGVEPKDIELVMTQAGVSKPRAVKALKLANGDIVSAIMELTT.

The protein belongs to the NAC-alpha family.

Its function is as follows. May promote appropriate targeting of ribosome-nascent polypeptide complexes. The protein is Nascent polypeptide-associated complex subunit alpha-like protein 3 of Arabidopsis thaliana (Mouse-ear cress).